The sequence spans 152 residues: MFP1 attachment factor 1 (152 aa).

Disordered regions lie at residues 1–33 (MAEI…PPTQ) and 107–152 (DTVK…ETEP). Positions 12-115 (TVTQETQNKP…IDTVKSRSAP (104 aa)) are WPP. The segment covering 134 to 152 (EPSSASGLTGEVSSVETEP) has biased composition (polar residues).

As to quaternary structure, interacts with WAP through its WPP domain. Binds to MFP1 and FPP proteins. As to expression, expressed in young tomato leaves, young fruits, and flowers (at protein level).

Its subcellular location is the nucleus envelope. It localises to the cytoplasm. The protein localises to the golgi apparatus. It is found in the nucleus. The protein resides in the nucleus matrix. This is MFP1 attachment factor 1 (MAF1) from Solanum lycopersicum (Tomato).